Consider the following 489-residue polypeptide: Serine/arginine-rich splicing factor 4 (489 aa).

Residues 2–72 (PRVYIGRLSY…ERVIVEHARG (71 aa)) enclose the RRM 1 domain. Disordered stretches follow at residues 72–95 (GPRR…GRDK) and 169–489 (KIRL…HSRS). S78 and S84 each carry phosphoserine. The region spanning 104–177 (YRLIVENLSS…RKIRLVEDKP (74 aa)) is the RRM 2 domain. Basic residues-rich tracts occupy residues 179–206 (SRRR…KSRS) and 214–246 (SHSK…KKEK). Positions 247-279 (SRSPSKDNKSRSRSRSPDKSRSKSKDHAEDKLQ) are enriched in basic and acidic residues. 3 positions are modified to phosphoserine: S289, S291, and S293. Over residues 293-332 (SRHDSKSRSRSQERRAEEERRRSVSRARSQEKSRSQEKSL) the composition is skewed to basic and acidic residues. Over residues 333–356 (LKSRSRSRSRSRSRSKDKRKGRKR) the composition is skewed to basic residues. Composition is skewed to basic and acidic residues over residues 357–370 (SRDE…SKSE) and 394–426 (KDTD…RAEG). A phosphoserine mark is found at S441, S453, and S455. Composition is skewed to basic residues over residues 456-469 (RSKS…RSKS) and 479-489 (SRSRSRSHSRS).

This sequence belongs to the splicing factor SR family. As to quaternary structure, found in a pre-mRNA splicing complex with SRSF4/SFRS4, SRSF5/SFRS5, SNRNP70, SNRPA1, SRRM1 and SRRM2. Interacts with PNN. In terms of processing, extensively phosphorylated on serine residues in the RS domain.

Its subcellular location is the nucleus speckle. Plays a role in alternative splice site selection during pre-mRNA splicing. Represses the splicing of MAPT/Tau exon 10. This Mus musculus (Mouse) protein is Serine/arginine-rich splicing factor 4 (Srsf4).